The sequence spans 114 residues: UPF0342 protein NWMN_1737 (114 aa).

Belongs to the UPF0342 family.

This Staphylococcus aureus (strain Newman) protein is UPF0342 protein NWMN_1737.